The primary structure comprises 151 residues: Putative pre-16S rRNA nuclease (151 aa).

Belongs to the YqgF nuclease family.

Its subcellular location is the cytoplasm. Its function is as follows. Could be a nuclease involved in processing of the 5'-end of pre-16S rRNA. The polypeptide is Putative pre-16S rRNA nuclease (Bifidobacterium longum subsp. infantis (strain ATCC 15697 / DSM 20088 / JCM 1222 / NCTC 11817 / S12)).